The sequence spans 111 residues: Photosystem II reaction center Psb28 protein (111 aa).

The protein belongs to the Psb28 family. Part of the photosystem II complex.

It localises to the cellular thylakoid membrane. This Crocosphaera subtropica (strain ATCC 51142 / BH68) (Cyanothece sp. (strain ATCC 51142)) protein is Photosystem II reaction center Psb28 protein.